The primary structure comprises 433 residues: 3-phosphoshikimate 1-carboxyvinyltransferase (433 aa).

Residues lysine 23, serine 24, and arginine 28 each contribute to the 3-phosphoshikimate site. Lysine 23 lines the phosphoenolpyruvate pocket. Positions 95 and 123 each coordinate phosphoenolpyruvate. The 3-phosphoshikimate site is built by serine 170, serine 171, glutamine 172, serine 198, aspartate 317, and lysine 344. Phosphoenolpyruvate is bound at residue glutamine 172. Residue aspartate 317 is the Proton acceptor of the active site. Positions 348, 391, and 416 each coordinate phosphoenolpyruvate.

It belongs to the EPSP synthase family. Monomer.

The protein resides in the cytoplasm. It catalyses the reaction 3-phosphoshikimate + phosphoenolpyruvate = 5-O-(1-carboxyvinyl)-3-phosphoshikimate + phosphate. Its pathway is metabolic intermediate biosynthesis; chorismate biosynthesis; chorismate from D-erythrose 4-phosphate and phosphoenolpyruvate: step 6/7. In terms of biological role, catalyzes the transfer of the enolpyruvyl moiety of phosphoenolpyruvate (PEP) to the 5-hydroxyl of shikimate-3-phosphate (S3P) to produce enolpyruvyl shikimate-3-phosphate and inorganic phosphate. This Neisseria meningitidis serogroup B (strain ATCC BAA-335 / MC58) protein is 3-phosphoshikimate 1-carboxyvinyltransferase.